Consider the following 987-residue polypeptide: Pro-apoptotic serine protease NMA111 (987 aa).

Residues 1-29 form a disordered region; it reads MPDIPTKRRLSNGSVIDNTNKRQMQSSFV. Over residues 11–28 the composition is skewed to polar residues; the sequence is SNGSVIDNTNKRQMQSSF. The tract at residues 69–262 is serine protease; it reads VKSVVSIQFT…LPVYRPLRAL (194 aa). Catalysis depends on charge relay system residues His110, Asp141, and Ser224. 2 PDZ domains span residues 279–364 and 878–950; these read EWSL…VVIQ and PHHG…VSFD.

Belongs to the peptidase S1C family.

It is found in the nucleus. Nuclear serine protease which mediates apoptosis. This chain is Pro-apoptotic serine protease NMA111 (NMA111), found in Debaryomyces hansenii (strain ATCC 36239 / CBS 767 / BCRC 21394 / JCM 1990 / NBRC 0083 / IGC 2968) (Yeast).